Consider the following 475-residue polypeptide: tRNA-2-methylthio-N(6)-dimethylallyladenosine synthase (475 aa).

Residues 1-10 (MHETTLKREG) show a composition bias toward basic and acidic residues. Residues 1–25 (MHETTLKREGASTPSNPTPSTHAAG) are disordered. Positions 12–23 (STPSNPTPSTHA) are enriched in polar residues. The 118-residue stretch at 27-144 (GKIYIRTFGC…LPELIRRRRD (118 aa)) folds into the MTTase N-terminal domain. Residues Cys36, Cys73, Cys107, Cys181, Cys185, and Cys188 each contribute to the [4Fe-4S] cluster site. Residues 167-400 (RVEGATAFVS…QALINEQAAA (234 aa)) enclose the Radical SAM core domain. In terms of domain architecture, TRAM spans 403-466 (QSMVGTRQRL…TNSLRGRVAG (64 aa)).

It belongs to the methylthiotransferase family. MiaB subfamily. In terms of assembly, monomer. [4Fe-4S] cluster serves as cofactor.

The protein localises to the cytoplasm. The enzyme catalyses N(6)-dimethylallyladenosine(37) in tRNA + (sulfur carrier)-SH + AH2 + 2 S-adenosyl-L-methionine = 2-methylsulfanyl-N(6)-dimethylallyladenosine(37) in tRNA + (sulfur carrier)-H + 5'-deoxyadenosine + L-methionine + A + S-adenosyl-L-homocysteine + 2 H(+). Catalyzes the methylthiolation of N6-(dimethylallyl)adenosine (i(6)A), leading to the formation of 2-methylthio-N6-(dimethylallyl)adenosine (ms(2)i(6)A) at position 37 in tRNAs that read codons beginning with uridine. This is tRNA-2-methylthio-N(6)-dimethylallyladenosine synthase from Bordetella avium (strain 197N).